Reading from the N-terminus, the 205-residue chain is Protein PYRAB00100 (205 aa).

An AMMECR1 domain is found at 7 to 201; that stretch reads EWGEFLVRLA…EEYPRGPVRR (195 aa).

This chain is Protein PYRAB00100, found in Pyrococcus abyssi (strain GE5 / Orsay).